A 353-amino-acid chain; its full sequence is MEKKAHFVKRDFPPREAPSLLLLLLVVAVLLLNALLYLYLGNLHGSSGRADAEPSLCPYGSFKLGPVKNCSPWLSCEAINREVRKLKCVGEGAVKKVFLSEWKENKVVISQLTKPELKEDFLHGLKMLKALQSKHVVRLLGYCEKQFTILTEYHPLGSLRGLNETLHIPKYKSMNTWHRRLMLAIDYVSIIRYLHSSPLGTLVMCDSNDLDKALSQYLLTSDFHILVNDLDALPLVNRSAGRLVKCGHRELWGEFVAPEQRWPYGEDVPFDDDLMPPYDEKTDIWKIPDVSNFFLGHVEGSDIVRLHLFDIHAACKKKDPAERPSAQEVLDTYKKVLTLLIREAAMPSTREML.

Residues 1–19 are Cytoplasmic-facing; sequence MEKKAHFVKRDFPPREAPS. Residues 20–40 form a helical; Signal-anchor for type II membrane protein membrane-spanning segment; that stretch reads LLLLLLVVAVLLLNALLYLYL. The Lumenal segment spans residues 41–353; sequence GNLHGSSGRA…AAMPSTREML (313 aa). Positions 83 to 353 constitute a Protein kinase domain; that stretch reads VRKLKCVGEG…AAMPSTREML (271 aa). Asparagine 163 and asparagine 237 each carry an N-linked (GlcNAc...) asparagine glycan.

This sequence belongs to the protein kinase superfamily. Ser/Thr protein kinase family. STKL subfamily.

Its subcellular location is the endoplasmic reticulum membrane. It carries out the reaction 3-O-[beta-D-GalNAc-(1-&gt;3)-beta-D-GlcNAc-(1-&gt;4)-alpha-D-Man]-L-Thr-[protein] + ATP = 3-O-[beta-D-GalNAc-(1-&gt;3)-beta-D-GlcNAc-(1-&gt;4)-(O-6-P-alpha-D-Man)]-Thr-[protein] + ADP + H(+). Functionally, protein O-mannose kinase that specifically mediates phosphorylation at the 6-position of an O-mannose of the trisaccharide (N-acetylgalactosamine (GalNAc)-beta-1,3-N-acetylglucosamine (GlcNAc)-beta-1,4-mannose) to generate phosphorylated O-mannosyl trisaccharide (N-acetylgalactosamine-beta-1,3-N-acetylglucosamine-beta-1,4-(phosphate-6-)mannose). Phosphorylated O-mannosyl trisaccharide is a carbohydrate structure present in alpha-dystroglycan (DAG1), which is required for binding laminin G-like domain-containing extracellular proteins with high affinity. Only shows kinase activity when the GalNAc-beta-3-GlcNAc-beta-terminus is linked to the 4-position of O-mannose, suggesting that this disaccharide serves as the substrate recognition motif. This Gallus gallus (Chicken) protein is Protein O-mannose kinase (POMK).